The sequence spans 248 residues: Probable transcriptional regulatory protein RPB_4273 (248 aa).

The tract at residues 1–22 is disordered; it reads MAGHSQFKNIMHRKGKQDAQRS.

It belongs to the TACO1 family.

It is found in the cytoplasm. This is Probable transcriptional regulatory protein RPB_4273 from Rhodopseudomonas palustris (strain HaA2).